We begin with the raw amino-acid sequence, 529 residues long: Meiosis 1 arrest protein (529 aa).

Disordered stretches follow at residues 180–201 (KGIQ…DESS) and 504–529 (AASK…PSHT). The span at 188-200 (SPSPTEEPSNDES) shows a compositional bias: polar residues. Ser516 bears the Phosphoserine mark.

In terms of tissue distribution, expressed in germ cells of the testis. Expressed from spermatogonia to spermatids. Expressed at very low levels in lung, stomach, thymus. Not detected in Sertoli cells.

The protein resides in the cytoplasm. In terms of biological role, required for meiosis I progression during spermatogenesis. In Mus musculus (Mouse), this protein is Meiosis 1 arrest protein (M1ap).